We begin with the raw amino-acid sequence, 129 residues long: Nif-specific regulatory protein (129 aa).

The Sigma-54 factor interaction domain occupies 1-46; the sequence is EFLLTKIGRQQGRPLTVTDSAIRLLMSHRWPGNVRDVENCLERSAI. Positions 101 to 129 form a DNA-binding region, H-T-H motif; it reads QAKAARLLGMTPRQIAYRIQTLNIHMRKI.

As to quaternary structure, interacts with sigma-54.

In terms of biological role, required for activation of most nif operons, which are directly involved in nitrogen fixation. The chain is Nif-specific regulatory protein (nifA) from Azotobacter chroococcum mcd 1.